The sequence spans 524 residues: Chromosomal replication initiator protein DnaA (524 aa).

The tract at residues 1–73 (MELPESAWEQ…DELLSSADHH (73 aa)) is domain I, interacts with DnaA modulators. The segment at 73–187 (HPITSVEISV…DVEGGLQHKS (115 aa)) is domain II. 3 stretches are compositionally biased toward polar residues: residues 86-95 (RSTSFETNQG), 106-126 (APRQNIASSQPSNSYSRQPQQ), and 153-165 (NGYNTESFAQPYN). A disordered region spans residues 86–173 (RSTSFETNQG…YNDNPMGQGK (88 aa)). Residues 188–404 (NLNPTFIFDN…GALKRVIANA (217 aa)) form a domain III, AAA+ region region. Residues glycine 232, glycine 234, lysine 235, and threonine 236 each contribute to the ATP site. The domain IV, binds dsDNA stretch occupies residues 405–524 (HFTGRDISVE…VKNLLRTLTT (120 aa)).

Belongs to the DnaA family. Oligomerizes as a right-handed, spiral filament on DNA at oriC.

Its subcellular location is the cytoplasm. Plays an essential role in the initiation and regulation of chromosomal replication. ATP-DnaA binds to the origin of replication (oriC) to initiate formation of the DNA replication initiation complex once per cell cycle. Binds the DnaA box (a 9 base pair repeat at the origin) and separates the double-stranded (ds)DNA. Forms a right-handed helical filament on oriC DNA; dsDNA binds to the exterior of the filament while single-stranded (ss)DNA is stabiized in the filament's interior. The ATP-DnaA-oriC complex binds and stabilizes one strand of the AT-rich DNA unwinding element (DUE), permitting loading of DNA polymerase. After initiation quickly degrades to an ADP-DnaA complex that is not apt for DNA replication. Binds acidic phospholipids. The chain is Chromosomal replication initiator protein DnaA from Saccharophagus degradans (strain 2-40 / ATCC 43961 / DSM 17024).